Consider the following 203-residue polypeptide: Probable chemoreceptor glutamine deamidase CheD (203 aa).

The protein belongs to the CheD family.

The catalysed reaction is L-glutaminyl-[protein] + H2O = L-glutamyl-[protein] + NH4(+). Its function is as follows. Probably deamidates glutamine residues to glutamate on methyl-accepting chemotaxis receptors (MCPs), playing an important role in chemotaxis. The chain is Probable chemoreceptor glutamine deamidase CheD from Janthinobacterium sp. (strain Marseille) (Minibacterium massiliensis).